The chain runs to 328 residues: RNA-binding motif protein, X-linked 2 (328 aa).

Lys-8 participates in a covalent cross-link: Glycyl lysine isopeptide (Lys-Gly) (interchain with G-Cter in SUMO2). The 79-residue stretch at 36–114 (AWIFLGGLPY…RTIRVDHVAN (79 aa)) folds into the RRM domain. The disordered stretch occupies residues 118 to 328 (PQESEDVDDV…SFHASDRRHY (211 aa)). Thr-140 bears the Phosphothreonine mark. Position 149 is a phosphoserine (Ser-149). Residues 157-172 (TKKPKKDKKEKKKKKE) show a composition bias toward basic residues. 3 stretches are compositionally biased toward basic and acidic residues: residues 192–219 (TVKE…ECRE), 236–247 (GRAEEPEWEAKK), and 255–273 (KPSS…DRGR). Lys-246 participates in a covalent cross-link: Glycyl lysine isopeptide (Lys-Gly) (interchain with G-Cter in SUMO2). Residue Ser-274 is modified to Phosphoserine. Positions 291–314 (HRSRSRSRSRSPDRSHRHKKHRYS) are enriched in basic residues. The span at 315–328 (HERESFHASDRRHY) shows a compositional bias: basic and acidic residues.

It belongs to the IST3 family. Part of the activated spliceosome B/catalytic step 1 spliceosome, one of the forms of the spliceosome which has a well-formed active site but still cannot catalyze the branching reaction and is composed of at least 52 proteins, the U2, U5 and U6 snRNAs and the pre-mRNA. Component of the minor spliceosome, which splices U12-type introns.

It is found in the nucleus. Functionally, involved in pre-mRNA splicing as component of the activated spliceosome. As a component of the minor spliceosome, involved in the splicing of U12-type introns in pre-mRNAs. The polypeptide is RNA-binding motif protein, X-linked 2 (Rbmx2) (Rattus norvegicus (Rat)).